The chain runs to 161 residues: Troponin C, slow skeletal and cardiac muscles (161 aa).

Met-1 is modified (N-acetylmethionine). 4 EF-hand domains span residues Gln-16–Asn-51, Pro-52–Asp-87, Lys-92–Thr-127, and Ile-128–Glu-161. 5 residues coordinate Ca(2+): Asp-65, Asp-67, Ser-69, Thr-71, and Glu-76. Ser-98 carries the phosphoserine modification. Ca(2+) contacts are provided by Asp-105, Asn-107, Asp-109, Tyr-111, Glu-116, Asp-141, Asn-143, Asp-145, Arg-147, and Glu-152.

This sequence belongs to the troponin C family.

Its function is as follows. Troponin is the central regulatory protein of striated muscle contraction. Tn consists of three components: Tn-I which is the inhibitor of actomyosin ATPase, Tn-T which contains the binding site for tropomyosin and Tn-C. The binding of calcium to Tn-C abolishes the inhibitory action of Tn on actin filaments. The sequence is that of Troponin C, slow skeletal and cardiac muscles (Tnnc1) from Mus musculus (Mouse).